The sequence spans 108 residues: Iron-sulfur cluster assembly protein CyaY (108 aa).

The protein belongs to the frataxin family.

Involved in iron-sulfur (Fe-S) cluster assembly. May act as a regulator of Fe-S biogenesis. The polypeptide is Iron-sulfur cluster assembly protein CyaY (Burkholderia cenocepacia (strain ATCC BAA-245 / DSM 16553 / LMG 16656 / NCTC 13227 / J2315 / CF5610) (Burkholderia cepacia (strain J2315))).